We begin with the raw amino-acid sequence, 560 residues long: MSQQHDDRRPPDTADRDLARQATSLAEKNERLTAALTAARAQLVEMKAQLEEVSKPPGSYAYFAAAHADGTADVYSAGRKLRLGVAPSVPLASLRPGQEVQLNEAMTVVAAGGYEPVGEVVTVKELIGSDRALVVGRADEERVVRLAGRLIGENVRVGDALTIEPRTGFVFERIPRSEVEDLVLEEVPDVAYADIGGLSSQIEAIRDAVELPFLHPDLFREHGLKPPKGLLLYGPPGCGKTLIAKAVATSLAHTAARRDADGEPAELPDGAARSYFLNVKGPELLNKFVGETERHIRLIFARARERASQGIPVVVFFDEMESLFRTRGTGVSSDVETTIVPQLLAEIDGVERLDNVIVIGASNREDMIDPAILRPGRLDVKIKVERPDAEAARDIFSKYLVADLPIHPDDLAEYGNDAATTVAAMIDRAVGRMYSTAPENEFLEVTYASGDKEVLYFKDFNSGAMIQNIVDRAKKHAIKDLLAGGRRGIRVDHVLEACVTEFKENEDLPNTTNPDDWARISGKKGERIVFIRTIVQKKSGETVGSVARAVENVATPGQYL.

Over residues 1-19 (MSQQHDDRRPPDTADRDLA) the composition is skewed to basic and acidic residues. The segment at 1 to 21 (MSQQHDDRRPPDTADRDLARQ) is disordered. Residues 16 to 55 (RDLARQATSLAEKNERLTAALTAARAQLVEMKAQLEEVSK) are a coiled coil. 237–242 (GCGKTL) serves as a coordination point for ATP. A docks into pockets in the proteasome alpha-ring region spans residues 559–560 (YL).

This sequence belongs to the AAA ATPase family. In terms of assembly, homohexamer. Assembles into a hexameric ring structure that caps the 20S proteasome core. Strongly interacts with the prokaryotic ubiquitin-like protein Pup through a hydrophobic interface; the interacting region of ARC lies in its N-terminal coiled-coil domain. There is one Pup binding site per ARC hexamer ring. Upon ATP-binding, the C-terminus of ARC interacts with the alpha-rings of the proteasome core, possibly by binding to the intersubunit pockets.

It participates in protein degradation; proteasomal Pup-dependent pathway. In terms of biological role, ATPase which is responsible for recognizing, binding, unfolding and translocation of pupylated proteins into the bacterial 20S proteasome core particle. May be essential for opening the gate of the 20S proteasome via an interaction with its C-terminus, thereby allowing substrate entry and access to the site of proteolysis. Thus, the C-termini of the proteasomal ATPase may function like a 'key in a lock' to induce gate opening and therefore regulate proteolysis. In Beutenbergia cavernae (strain ATCC BAA-8 / DSM 12333 / CCUG 43141 / JCM 11478 / NBRC 16432 / NCIMB 13614 / HKI 0122), this protein is Proteasome-associated ATPase.